A 69-amino-acid chain; its full sequence is DNA gyrase inhibitor YacG (69 aa).

Residues C13, C16, C32, and C36 each coordinate Zn(2+).

It belongs to the DNA gyrase inhibitor YacG family. Interacts with GyrB. Zn(2+) is required as a cofactor.

Its function is as follows. Inhibits all the catalytic activities of DNA gyrase by preventing its interaction with DNA. Acts by binding directly to the C-terminal domain of GyrB, which probably disrupts DNA binding by the gyrase. The polypeptide is DNA gyrase inhibitor YacG (Neisseria meningitidis serogroup B (strain ATCC BAA-335 / MC58)).